An 82-amino-acid polypeptide reads, in one-letter code: Splicing factor U2AF 35 kDa subunit (82 aa).

The residue at position 2 (alanine 2) is an N-acetylalanine. A C3H1-type zinc finger spans residues 12-40; that stretch reads EKDKVNCSFYFKIGACRHGDRCSRLHNKP. An N6-methyllysine modification is found at lysine 39. One can recognise an RRM domain in the interval 65–82; sequence SHCHVSDVEVQEHYDNFF.

The protein belongs to the splicing factor SR family. Identified in the spliceosome C complex. Heterodimer with U2AF2. Interacts (via RS domain) with PHF5A (via N-terminus). Interacts with ZRANB2. Interacts with SDE2. Interacts with SF3B1.

It is found in the nucleus. It localises to the nucleus speckle. Its function is as follows. Plays a critical role in both constitutive and enhancer-dependent splicing by mediating protein-protein interactions and protein-RNA interactions required for accurate 3'-splice site selection. Recruits U2 snRNP to the branch point. Directly mediates interactions between U2AF2 and proteins bound to the enhancers and thus may function as a bridge between U2AF2 and the enhancer complex to recruit it to the adjacent intron. The sequence is that of Splicing factor U2AF 35 kDa subunit (U2AF1) from Sus scrofa (Pig).